Consider the following 502-residue polypeptide: ATP synthase subunit alpha (502 aa).

Position 169-176 (169-176 (GDRQTGKT)) interacts with ATP.

Belongs to the ATPase alpha/beta chains family. F-type ATPases have 2 components, CF(1) - the catalytic core - and CF(0) - the membrane proton channel. CF(1) has five subunits: alpha(3), beta(3), gamma(1), delta(1), epsilon(1). CF(0) has three main subunits: a(1), b(2) and c(9-12). The alpha and beta chains form an alternating ring which encloses part of the gamma chain. CF(1) is attached to CF(0) by a central stalk formed by the gamma and epsilon chains, while a peripheral stalk is formed by the delta and b chains.

The protein localises to the cell inner membrane. The catalysed reaction is ATP + H2O + 4 H(+)(in) = ADP + phosphate + 5 H(+)(out). Functionally, produces ATP from ADP in the presence of a proton gradient across the membrane. The alpha chain is a regulatory subunit. The chain is ATP synthase subunit alpha from Trichlorobacter lovleyi (strain ATCC BAA-1151 / DSM 17278 / SZ) (Geobacter lovleyi).